The following is a 346-amino-acid chain: Heat-inducible transcription repressor HrcA (346 aa).

This sequence belongs to the HrcA family.

Functionally, negative regulator of class I heat shock genes (grpE-dnaK-dnaJ and groELS operons). Prevents heat-shock induction of these operons. In Erythrobacter litoralis (strain HTCC2594), this protein is Heat-inducible transcription repressor HrcA.